We begin with the raw amino-acid sequence, 325 residues long: DNA-directed RNA polymerase subunit alpha (325 aa).

Residues 1–231 are alpha N-terminal domain (alpha-NTD); the sequence is MQTSLLKPKI…DQLSVFAALE (231 aa). Residues 246–325 are alpha C-terminal domain (alpha-CTD); sequence IDPILLRPVD…ENWPPAGLDK (80 aa).

The protein belongs to the RNA polymerase alpha chain family. Homodimer. The RNAP catalytic core consists of 2 alpha, 1 beta, 1 beta' and 1 omega subunit. When a sigma factor is associated with the core the holoenzyme is formed, which can initiate transcription.

It catalyses the reaction RNA(n) + a ribonucleoside 5'-triphosphate = RNA(n+1) + diphosphate. DNA-dependent RNA polymerase catalyzes the transcription of DNA into RNA using the four ribonucleoside triphosphates as substrates. This Burkholderia thailandensis (strain ATCC 700388 / DSM 13276 / CCUG 48851 / CIP 106301 / E264) protein is DNA-directed RNA polymerase subunit alpha.